A 313-amino-acid polypeptide reads, in one-letter code: Ribosomal protein L11 methyltransferase (313 aa).

S-adenosyl-L-methionine contacts are provided by T161, G182, D204, and N247.

This sequence belongs to the methyltransferase superfamily. PrmA family.

The protein resides in the cytoplasm. The enzyme catalyses L-lysyl-[protein] + 3 S-adenosyl-L-methionine = N(6),N(6),N(6)-trimethyl-L-lysyl-[protein] + 3 S-adenosyl-L-homocysteine + 3 H(+). Its function is as follows. Methylates ribosomal protein L11. In Alkaliphilus oremlandii (strain OhILAs) (Clostridium oremlandii (strain OhILAs)), this protein is Ribosomal protein L11 methyltransferase.